The following is a 391-amino-acid chain: Digeranylgeranylglycerophospholipid reductase (391 aa).

FAD is bound by residues glycine 19, aspartate 38, cysteine 49, alanine 50, alanine 52, arginine 99, valine 123, aspartate 279, glycine 291, and isoleucine 292. Residue valine 369 coordinates a 2,3-bis-O-(geranylgeranyl)-sn-glycerol 1-phospholipid.

The protein belongs to the geranylgeranyl reductase family. DGGGPL reductase subfamily. Requires FAD as cofactor.

It catalyses the reaction a 2,3-bis-O-phytanyl-sn-glycerol 1-phospholipid + 8 A = a 2,3-bis-O-(geranylgeranyl)-sn-glycerol 1-phospholipid + 8 AH2. It carries out the reaction 2,3-bis-O-(phytanyl)-sn-glycerol 1-phosphate + 8 A = 2,3-bis-O-(geranylgeranyl)-sn-glycerol 1-phosphate + 8 AH2. The enzyme catalyses CDP-2,3-bis-O-(geranylgeranyl)-sn-glycerol + 8 AH2 = CDP-2,3-bis-O-(phytanyl)-sn-glycerol + 8 A. The catalysed reaction is archaetidylserine + 8 AH2 = 2,3-bis-O-phytanyl-sn-glycero-3-phospho-L-serine + 8 A. Its pathway is membrane lipid metabolism; glycerophospholipid metabolism. In terms of biological role, is involved in the reduction of 2,3-digeranylgeranylglycerophospholipids (unsaturated archaeols) into 2,3-diphytanylglycerophospholipids (saturated archaeols) in the biosynthesis of archaeal membrane lipids. Catalyzes the formation of archaetidic acid (2,3-di-O-phytanyl-sn-glyceryl phosphate) from 2,3-di-O-geranylgeranylglyceryl phosphate (DGGGP) via the hydrogenation of each double bond of the isoprenoid chains. Is also probably able to reduce double bonds of geranyl groups in CDP-2,3-bis-O-(geranylgeranyl)-sn-glycerol and archaetidylserine, thus acting at various stages in the biosynthesis of archaeal membrane lipids. In Methanococcus aeolicus (strain ATCC BAA-1280 / DSM 17508 / OCM 812 / Nankai-3), this protein is Digeranylgeranylglycerophospholipid reductase.